The following is a 367-amino-acid chain: Small ribosomal subunit biogenesis GTPase RsgA (367 aa).

The CP-type G domain maps to 112-267 (AEQVLATNVD…VIDTPGLREL (156 aa)). GTP contacts are provided by residues 157–160 (NKSD) and 209–217 (GSSGAGKST). Zn(2+) is bound by residues Cys291, Cys296, His298, and Cys304.

This sequence belongs to the TRAFAC class YlqF/YawG GTPase family. RsgA subfamily. In terms of assembly, monomer. Associates with 30S ribosomal subunit, binds 16S rRNA. It depends on Zn(2+) as a cofactor.

The protein localises to the cytoplasm. One of several proteins that assist in the late maturation steps of the functional core of the 30S ribosomal subunit. Helps release RbfA from mature subunits. May play a role in the assembly of ribosomal proteins into the subunit. Circularly permuted GTPase that catalyzes slow GTP hydrolysis, GTPase activity is stimulated by the 30S ribosomal subunit. The chain is Small ribosomal subunit biogenesis GTPase RsgA from Opitutus terrae (strain DSM 11246 / JCM 15787 / PB90-1).